A 248-amino-acid polypeptide reads, in one-letter code: Small ribosomal subunit protein uS2 (248 aa).

The protein belongs to the universal ribosomal protein uS2 family.

This chain is Small ribosomal subunit protein uS2, found in Leptothrix cholodnii (strain ATCC 51168 / LMG 8142 / SP-6) (Leptothrix discophora (strain SP-6)).